A 269-amino-acid chain; its full sequence is Formamidopyrimidine-DNA glycosylase (269 aa).

The active-site Schiff-base intermediate with DNA is the proline 2. The Proton donor role is filled by glutamate 3. Lysine 57 acts as the Proton donor; for beta-elimination activity in catalysis. Residues histidine 90, arginine 109, and arginine 150 each contribute to the DNA site. The segment at glutamine 235–arginine 269 adopts an FPG-type zinc-finger fold. Arginine 259 (proton donor; for delta-elimination activity) is an active-site residue.

The protein belongs to the FPG family. In terms of assembly, monomer. Zn(2+) serves as cofactor.

It catalyses the reaction Hydrolysis of DNA containing ring-opened 7-methylguanine residues, releasing 2,6-diamino-4-hydroxy-5-(N-methyl)formamidopyrimidine.. The enzyme catalyses 2'-deoxyribonucleotide-(2'-deoxyribose 5'-phosphate)-2'-deoxyribonucleotide-DNA = a 3'-end 2'-deoxyribonucleotide-(2,3-dehydro-2,3-deoxyribose 5'-phosphate)-DNA + a 5'-end 5'-phospho-2'-deoxyribonucleoside-DNA + H(+). Its function is as follows. Involved in base excision repair of DNA damaged by oxidation or by mutagenic agents. Acts as a DNA glycosylase that recognizes and removes damaged bases. Has a preference for oxidized purines, such as 7,8-dihydro-8-oxoguanine (8-oxoG). Has AP (apurinic/apyrimidinic) lyase activity and introduces nicks in the DNA strand. Cleaves the DNA backbone by beta-delta elimination to generate a single-strand break at the site of the removed base with both 3'- and 5'-phosphates. The chain is Formamidopyrimidine-DNA glycosylase from Edwardsiella ictaluri (strain 93-146).